The chain runs to 310 residues: ADP-L-glycero-D-manno-heptose-6-epimerase (310 aa).

NADP(+) contacts are provided by residues Phe-10–Ile-11, Asp-31–Asn-32, Lys-38, Lys-53, Glu-75–Ser-79, and Asn-92. Tyr-140 functions as the Proton acceptor in the catalytic mechanism. Lys-144 is a binding site for NADP(+). Asn-169 is a substrate binding site. NADP(+)-binding residues include Val-170 and Lys-178. The Proton acceptor role is filled by Lys-178. Residues Ser-180, His-187, Phe-201 to Ser-204, Arg-209, and Tyr-272 contribute to the substrate site.

The protein belongs to the NAD(P)-dependent epimerase/dehydratase family. HldD subfamily. As to quaternary structure, homopentamer. The cofactor is NADP(+).

It carries out the reaction ADP-D-glycero-beta-D-manno-heptose = ADP-L-glycero-beta-D-manno-heptose. It participates in nucleotide-sugar biosynthesis; ADP-L-glycero-beta-D-manno-heptose biosynthesis; ADP-L-glycero-beta-D-manno-heptose from D-glycero-beta-D-manno-heptose 7-phosphate: step 4/4. In terms of biological role, catalyzes the interconversion between ADP-D-glycero-beta-D-manno-heptose and ADP-L-glycero-beta-D-manno-heptose via an epimerization at carbon 6 of the heptose. This is ADP-L-glycero-D-manno-heptose-6-epimerase from Salmonella paratyphi C (strain RKS4594).